We begin with the raw amino-acid sequence, 901 residues long: MEANQCPLVVEPSYPDLVINVGEVTLGEENRKKLQKIQRDQEKERVMRAACALLNSGGGVIRMAKKVEHPVEMGLDLEQSLRELIQSSDLQAFFETKQQGRCFYIFVKSWSSGPFPEDRSVKPRLCSLSSSLYRRSETSVRSMDSREAFCFLKTKRKPKILEEGPFHKIHKGVYQELPNSDPADPNSDPADLIFQKDYLEYGEILPFPESQLVEFKQFSTKHFQEYVKRTIPEYVPAFANTGGGYLFIGVDDKSREVLGCAKENVDPDSLRRKIEQAIYKLPCVHFCQPQRPITFTLKIVNVLKRGELYGYACMIRVNPFCCAVFSEAPNSWIVEDKYVCSLTTEKWVGMMTDTDPDLLQLSEDFECQLSLSSGPPLSRPVYSKKGLEHKKELQQLLFSVPPGYLRYTPESLWRDLISEHRGLEELINKQMQPFFRGILIFSRSWAVDLNLQEKPGVICDALLIAQNSTPILYTILREQDAEGQDYCTRTAFTLKQKLVNMGGYTGKVCVRAKVLCLSPESSAEALEAAVSPMDYPASYSLAGTQHMEALLQSLVIVLLGFRSLLSDQLGCEVLNLLTAQQYEIFSRSLRKNRELFVHGLPGSGKTIMAMKIMEKIRNVFHCEAHRILYVCENQPLRNFISDRNICRAETRKTFLRENFEHIQHIVIDEAQNFRTEDGDWYGKAKSITRRAKGGPGILWIFLDYFQTSHLDCSGLPPLSDQYPREELTRIVRNADPIAKYLQKEMQVIRSNPSFNIPTGCLEVFPEAEWSQGVQGTLRIKKYLTVEQIMTCVADTCRRFFDRGYSPKDVAVLVSTAKEVEHYKYELLKAMRKKRVVQLSDACDMLGDHIVLDSVRRFSGLERSIVFGIHPRTADPAILPNVLICLASRAKQHLYIFPWGGH.

Residues E209 and E214 each coordinate Mg(2+). K216 is an active-site residue. Residues H285, C287, C321, and C322 each coordinate Zn(2+). 599-606 contributes to the ATP binding site; the sequence is GLPGSGKT.

This sequence belongs to the Schlafen family. Subgroup III subfamily. Homodimer. Interacts with MCM3. Interacts with DHX9. Interacts with RPA1. Mg(2+) serves as cofactor. Exhibits a wider expression range in ovarian and colon adenocarcinoma than in their corresponding healthy tissues.

It is found in the nucleus. The protein resides in the chromosome. Functionally, inhibitor of DNA replication that promotes cell death in response to DNA damage. Acts as a guardian of the genome by killing cells with defective replication. Persistently blocks stressed replication forks by opening chromatin across replication initiation sites at stressed replication forks, possibly leading to unwind DNA ahead of the MCM helicase and block fork progression, ultimately leading to cell death. Upon DNA damage, inhibits translation of ATR or ATM based on distinct codon usage without disrupting early DNA damage response signaling. Antiviral restriction factor with manganese-dependent type II tRNA endoribonuclease. A single tRNA molecule is bound and cleaved by the SLFN11 dimer. Specifically abrogates the production of retroviruses such as human immunodeficiency virus 1 (HIV-1) by acting as a specific inhibitor of the synthesis of retroviruses encoded proteins in a codon-usage-dependent manner. Impairs the replication of human cytomegalovirus (HCMV) and some Flaviviruses. Exploits the unique viral codon bias towards A/T nucleotides. Also acts as an interferon (IFN)-induced antiviral protein which acts as an inhibitor of retrovirus protein synthesis. This is Schlafen family member 11 from Homo sapiens (Human).